A 107-amino-acid chain; its full sequence is U1-lycotoxin-Ls1m (107 aa).

A signal peptide spans 1–20; it reads MMKVLVVVALLVTLISYSSS. The propeptide occupies 21–41; that stretch reads EGIDDLEADELLSLMANEQTR. Cystine bridges form between cysteine 44-cysteine 59, cysteine 51-cysteine 68, cysteine 58-cysteine 86, and cysteine 70-cysteine 84.

This sequence belongs to the neurotoxin 19 (CSTX) family. 04 (U1-Lctx) subfamily. In terms of tissue distribution, expressed by the venom gland.

The protein resides in the secreted. This chain is U1-lycotoxin-Ls1m, found in Lycosa singoriensis (Wolf spider).